The primary structure comprises 197 residues: MQIVLASQSPSRRRILNSAGVEPLIHPADVDEDALLHSLNGSAPEEIVRQLALAKAQVVAPSYPGDVVIGGDSMLLIDATLQGKPHTREATIERWKQQRGNKATLITGHAIIFGDEVIVESSSTNIHFAEASDVDIERYADSGEPLECAGAFTLEALGGWFIDSIEGDPSSVIGLSLPVVRRALYRLGFNASDFWNM.

Residue aspartate 72 is the Proton acceptor of the active site.

The protein belongs to the Maf family. It depends on a divalent metal cation as a cofactor.

It is found in the cytoplasm. It carries out the reaction a ribonucleoside 5'-triphosphate + H2O = a ribonucleoside 5'-phosphate + diphosphate + H(+). The enzyme catalyses a 2'-deoxyribonucleoside 5'-triphosphate + H2O = a 2'-deoxyribonucleoside 5'-phosphate + diphosphate + H(+). In terms of biological role, nucleoside triphosphate pyrophosphatase. May have a dual role in cell division arrest and in preventing the incorporation of modified nucleotides into cellular nucleic acids. The chain is Nucleoside triphosphate pyrophosphatase from Corynebacterium glutamicum (strain ATCC 13032 / DSM 20300 / JCM 1318 / BCRC 11384 / CCUG 27702 / LMG 3730 / NBRC 12168 / NCIMB 10025 / NRRL B-2784 / 534).